The following is a 527-amino-acid chain: Formate--tetrahydrofolate ligase (527 aa).

53 to 60 (TSSGEGKT) provides a ligand contact to ATP.

This sequence belongs to the formate--tetrahydrofolate ligase family.

The catalysed reaction is (6S)-5,6,7,8-tetrahydrofolate + formate + ATP = (6R)-10-formyltetrahydrofolate + ADP + phosphate. Its pathway is one-carbon metabolism; tetrahydrofolate interconversion. The polypeptide is Formate--tetrahydrofolate ligase (Acholeplasma laidlawii (strain PG-8A)).